Here is a 274-residue protein sequence, read N- to C-terminus: Large ribosomal subunit protein uL2 (274 aa).

Disordered regions lie at residues 38–57 (KRTGGRNNNGHITTRHVGGG) and 224–256 (AMNPIDHPHGGGEGRNKGIQPVSPWGQKAKGYK). Basic and acidic residues predominate over residues 229-239 (DHPHGGGEGRN).

The protein belongs to the universal ribosomal protein uL2 family. As to quaternary structure, part of the 50S ribosomal subunit. Forms a bridge to the 30S subunit in the 70S ribosome.

In terms of biological role, one of the primary rRNA binding proteins. Required for association of the 30S and 50S subunits to form the 70S ribosome, for tRNA binding and peptide bond formation. It has been suggested to have peptidyltransferase activity; this is somewhat controversial. Makes several contacts with the 16S rRNA in the 70S ribosome. The chain is Large ribosomal subunit protein uL2 from Acinetobacter baumannii (strain AB307-0294).